The sequence spans 388 residues: Succinate--CoA ligase [ADP-forming] subunit beta (388 aa).

In terms of domain architecture, ATP-grasp spans K9 to H244. ATP-binding positions include K46, G53–G55, E99, T102, and E107. Mg(2+)-binding residues include N199 and D213. Residues N264 and G321–V323 contribute to the substrate site.

The protein belongs to the succinate/malate CoA ligase beta subunit family. In terms of assembly, heterotetramer of two alpha and two beta subunits. It depends on Mg(2+) as a cofactor.

It catalyses the reaction succinate + ATP + CoA = succinyl-CoA + ADP + phosphate. It carries out the reaction GTP + succinate + CoA = succinyl-CoA + GDP + phosphate. It participates in carbohydrate metabolism; tricarboxylic acid cycle; succinate from succinyl-CoA (ligase route): step 1/1. Functionally, succinyl-CoA synthetase functions in the citric acid cycle (TCA), coupling the hydrolysis of succinyl-CoA to the synthesis of either ATP or GTP and thus represents the only step of substrate-level phosphorylation in the TCA. The beta subunit provides nucleotide specificity of the enzyme and binds the substrate succinate, while the binding sites for coenzyme A and phosphate are found in the alpha subunit. The chain is Succinate--CoA ligase [ADP-forming] subunit beta from Shewanella sediminis (strain HAW-EB3).